The sequence spans 86 residues: Large ribosomal subunit protein bL27 (86 aa).

The segment covering 1–10 (MAQKKGGGST) has biased composition (gly residues). Positions 1-20 (MAQKKGGGSTRNGRDSESKR) are disordered.

This sequence belongs to the bacterial ribosomal protein bL27 family.

The chain is Large ribosomal subunit protein bL27 from Bordetella avium (strain 197N).